The sequence spans 420 residues: 3-phosphoshikimate 1-carboxyvinyltransferase (420 aa).

Residues K20, S21, and R25 each coordinate 3-phosphoshikimate. Position 20 (K20) interacts with phosphoenolpyruvate. Phosphoenolpyruvate is bound at residue R119. 3-phosphoshikimate-binding residues include S161, S162, Q163, S189, D303, Q326, and K330. Phosphoenolpyruvate is bound at residue Q163. D303 functions as the Proton acceptor in the catalytic mechanism. Phosphoenolpyruvate-binding residues include R334, R375, and K400.

The protein belongs to the EPSP synthase family. In terms of assembly, monomer.

The protein resides in the cytoplasm. The catalysed reaction is 3-phosphoshikimate + phosphoenolpyruvate = 5-O-(1-carboxyvinyl)-3-phosphoshikimate + phosphate. The protein operates within metabolic intermediate biosynthesis; chorismate biosynthesis; chorismate from D-erythrose 4-phosphate and phosphoenolpyruvate: step 6/7. Catalyzes the transfer of the enolpyruvyl moiety of phosphoenolpyruvate (PEP) to the 5-hydroxyl of shikimate-3-phosphate (S3P) to produce enolpyruvyl shikimate-3-phosphate and inorganic phosphate. This chain is 3-phosphoshikimate 1-carboxyvinyltransferase, found in Dehalococcoides mccartyi (strain ATCC BAA-2266 / KCTC 15142 / 195) (Dehalococcoides ethenogenes (strain 195)).